Consider the following 103-residue polypeptide: Large ribosomal subunit protein bL21 (103 aa).

It belongs to the bacterial ribosomal protein bL21 family. Part of the 50S ribosomal subunit. Contacts protein L20.

In terms of biological role, this protein binds to 23S rRNA in the presence of protein L20. The sequence is that of Large ribosomal subunit protein bL21 from Pseudoalteromonas atlantica (strain T6c / ATCC BAA-1087).